Reading from the N-terminus, the 679-residue chain is Methionine--tRNA ligase (679 aa).

The 'HIGH' region signature appears at 15 to 25 (PYANGSIHLGH). Zn(2+) is bound by residues Cys146, Cys149, Cys159, and Cys162. The 'KMSKS' region motif lies at 332-336 (KMSKS). Lys335 contributes to the ATP binding site. Residues 577 to 679 (DFAKVDMRVA…AGALPGMPVK (103 aa)) enclose the tRNA-binding domain.

The protein belongs to the class-I aminoacyl-tRNA synthetase family. MetG type 1 subfamily. In terms of assembly, homodimer. Zn(2+) serves as cofactor.

The protein localises to the cytoplasm. It carries out the reaction tRNA(Met) + L-methionine + ATP = L-methionyl-tRNA(Met) + AMP + diphosphate. In terms of biological role, is required not only for elongation of protein synthesis but also for the initiation of all mRNA translation through initiator tRNA(fMet) aminoacylation. This Sodalis glossinidius (strain morsitans) protein is Methionine--tRNA ligase.